The primary structure comprises 172 residues: Large ribosomal subunit protein uL10 (172 aa).

The protein belongs to the universal ribosomal protein uL10 family. Part of the ribosomal stalk of the 50S ribosomal subunit. The N-terminus interacts with L11 and the large rRNA to form the base of the stalk. The C-terminus forms an elongated spine to which L12 dimers bind in a sequential fashion forming a multimeric L10(L12)X complex.

Functionally, forms part of the ribosomal stalk, playing a central role in the interaction of the ribosome with GTP-bound translation factors. This is Large ribosomal subunit protein uL10 from Ruegeria sp. (strain TM1040) (Silicibacter sp.).